The primary structure comprises 202 residues: Urease accessory protein UreG (202 aa).

A GTP-binding site is contributed by 11–18 (GPVGSGKT).

It belongs to the SIMIBI class G3E GTPase family. UreG subfamily. As to quaternary structure, homodimer. UreD, UreF and UreG form a complex that acts as a GTP-hydrolysis-dependent molecular chaperone, activating the urease apoprotein by helping to assemble the nickel containing metallocenter of UreC. The UreE protein probably delivers the nickel.

The protein localises to the cytoplasm. In terms of biological role, facilitates the functional incorporation of the urease nickel metallocenter. This process requires GTP hydrolysis, probably effectuated by UreG. In Prochlorococcus marinus (strain MIT 9313), this protein is Urease accessory protein UreG.